The sequence spans 540 residues: DEAD-box ATP-dependent RNA helicase 57 (540 aa).

Positions 24–73 (DFARFRQGPPAPDVASAAAPSPEKKRKRQSKAKAKKSKKRRAEGADSASD) are disordered. Residues 47–64 (KKRKRQSKAKAKKSKKRR) show a composition bias toward basic residues. Positions 101-129 (KSEDSEVVRRRKEVEREIERAAILRKKFD) form a coiled coil. Positions 146 to 174 (ELVSRYGCDSYLVGNLSKLGFQEPTPIQR) match the Q motif motif. The Helicase ATP-binding domain occupies 177–347 (IPILLSGREC…RTIMHDAVRV (171 aa)). Position 190–197 (190–197 (APTGSGKT)) interacts with ATP. Residues 294-297 (DESD) carry the DEAD box motif. A Helicase C-terminal domain is found at 375–519 (ALRQSFAESL…EVPSWIKALP (145 aa)).

The protein belongs to the DEAD box helicase family. DDX52/ROK1 subfamily.

It catalyses the reaction ATP + H2O = ADP + phosphate + H(+). The polypeptide is DEAD-box ATP-dependent RNA helicase 57 (Oryza sativa subsp. japonica (Rice)).